The primary structure comprises 501 residues: Cytochrome P450 4c21 (501 aa).

2 residues coordinate heme: E309 and C447.

Belongs to the cytochrome P450 family. It depends on heme as a cofactor.

The protein resides in the endoplasmic reticulum membrane. It is found in the microsome membrane. It catalyses the reaction an organic molecule + reduced [NADPH--hemoprotein reductase] + O2 = an alcohol + oxidized [NADPH--hemoprotein reductase] + H2O + H(+). This chain is Cytochrome P450 4c21 (CYP4C21), found in Blattella germanica (German cockroach).